Reading from the N-terminus, the 229-residue chain is Cytidylate kinase (229 aa).

10 to 18 (GPAGSGKST) serves as a coordination point for ATP.

It belongs to the cytidylate kinase family. Type 1 subfamily.

The protein localises to the cytoplasm. It carries out the reaction CMP + ATP = CDP + ADP. It catalyses the reaction dCMP + ATP = dCDP + ADP. The polypeptide is Cytidylate kinase (Leptospira interrogans serogroup Icterohaemorrhagiae serovar Lai (strain 56601)).